We begin with the raw amino-acid sequence, 342 residues long: GTPase Obg (342 aa).

The 159-residue stretch at 1-159 folds into the Obg domain; sequence MQFIDQAKIE…KQLRLELKLL (159 aa). In terms of domain architecture, OBG-type G spans 160-330; that stretch reads AEVGIIGLPN…MLQEIWGILD (171 aa). Residues 166-173, 191-195, 213-216, 280-283, and 311-313 contribute to the GTP site; these read GLPNAGKS, FTTLI, DIPG, NKID, and SAV. Mg(2+) is bound by residues S173 and T193.

This sequence belongs to the TRAFAC class OBG-HflX-like GTPase superfamily. OBG GTPase family. As to quaternary structure, monomer. It depends on Mg(2+) as a cofactor.

It is found in the cytoplasm. In terms of biological role, an essential GTPase which binds GTP, GDP and possibly (p)ppGpp with moderate affinity, with high nucleotide exchange rates and a fairly low GTP hydrolysis rate. Plays a role in control of the cell cycle, stress response, ribosome biogenesis and in those bacteria that undergo differentiation, in morphogenesis control. This chain is GTPase Obg, found in Nostoc punctiforme (strain ATCC 29133 / PCC 73102).